Reading from the N-terminus, the 377-residue chain is Palmitoyltransferase ZDHHC16 (377 aa).

Residues 1-77 (MRGQRSLLLG…VYWLVDNVIR (77 aa)) are Cytoplasmic-facing. The chain crosses the membrane as a helical span at residues 78-98 (WFGVVFVVLVIVLTGSIVAIA). Topologically, residues 99-116 (YLCVLPLILRTYSVPRLC) are lumenal. Residues 117 to 137 (WHFFYSHWNLILIVFHYYQAI) form a helical membrane-spanning segment. Over 138–198 (TTPPGYPPQG…NNCVGHYNHR (61 aa)) the chain is Cytoplasmic. A DHHC domain is found at 155–205 (SICKKCIYPKPARTHHCSICNRCVLKMDHHCPWLNNCVGHYNHRYFFSFCF). Cys-185 acts as the S-palmitoyl cysteine intermediate in catalysis. Residues 199-219 (YFFSFCFFMTLGCVYCSYGSW) form a helical membrane-spanning segment. At 220–266 (DLFREAYAAIEKMKQLDKNKLQAVANQTYHQTPPPIFSFRERMTHKS) the chain is on the lumenal side. Residues 267 to 287 (LVYLWFLCSSVALALGALTVW) form a helical membrane-spanning segment. The Cytoplasmic portion of the chain corresponds to 288-377 (HAVLISRGET…TAHSASVMAV (90 aa)).

It belongs to the DHHC palmitoyltransferase family. In terms of assembly, interacts with ABL1. Interacts with COPS5/JAB1.

It localises to the endoplasmic reticulum membrane. The catalysed reaction is L-cysteinyl-[protein] + hexadecanoyl-CoA = S-hexadecanoyl-L-cysteinyl-[protein] + CoA. In terms of biological role, palmitoyl acyltransferase that mediates palmitoylation of proteins such as PLN and ZDHHC6. Required during embryonic heart development and cardiac function, possibly by mediating palmitoylation of PLN, thereby affecting PLN phosphorylation and homooligomerization. Also required for eye development. Palmitoylates ZDHHC6, affecting the quaternary assembly of ZDHHC6, its localization, stability and function. May play a role in DNA damage response. May be involved in apoptosis regulation. Involved in the proliferation of neural stem cells by regulating the FGF/ERK pathway. The sequence is that of Palmitoyltransferase ZDHHC16 from Macaca fascicularis (Crab-eating macaque).